Reading from the N-terminus, the 89-residue chain is Small ribosomal subunit protein uS15 (89 aa).

This sequence belongs to the universal ribosomal protein uS15 family. As to quaternary structure, part of the 30S ribosomal subunit. Forms a bridge to the 50S subunit in the 70S ribosome, contacting the 23S rRNA.

One of the primary rRNA binding proteins, it binds directly to 16S rRNA where it helps nucleate assembly of the platform of the 30S subunit by binding and bridging several RNA helices of the 16S rRNA. Functionally, forms an intersubunit bridge (bridge B4) with the 23S rRNA of the 50S subunit in the ribosome. This is Small ribosomal subunit protein uS15 from Streptococcus pyogenes serotype M1.